We begin with the raw amino-acid sequence, 446 residues long: Probable E3 ubiquitin-protein ligase XBOS31 (446 aa).

5 ANK repeats span residues 46 to 75 (DRFT…DVDV), 79 to 108 (KKQT…NVLT), 113 to 142 (RART…QAQG), 160 to 189 (RGAT…IVSA), and 197 to 227 (PGST…RLQR). The RING-type zinc-finger motif lies at 317–366 (CNICFEQACSMEVKECGHQMCAACTLAICCHSKPNPKTLLLHPPACPFCR). Residues 376–401 (TTNSNKTNSRRRSRSRSSSFKGGLSS) form a disordered region.

The catalysed reaction is S-ubiquitinyl-[E2 ubiquitin-conjugating enzyme]-L-cysteine + [acceptor protein]-L-lysine = [E2 ubiquitin-conjugating enzyme]-L-cysteine + N(6)-ubiquitinyl-[acceptor protein]-L-lysine.. It functions in the pathway protein modification; protein ubiquitination. The chain is Probable E3 ubiquitin-protein ligase XBOS31 (XBOS31) from Oryza sativa subsp. japonica (Rice).